Here is a 978-residue protein sequence, read N- to C-terminus: Transcription factor MYCGRDRAFT_87993 (978 aa).

C2H2-type zinc fingers lie at residues 2–24 (VFCT…ILTH) and 30–52 (FKCF…YTVH). A DNA-binding region (zn(2)-C6 fungal-type) is located at residues 79-105 (CSNCAKTKTKCDKKFPCSRCAGRNLRC). Disordered stretches follow at residues 113–231 (ASKN…SPRF) and 426–445 (THRE…PSGA). Residues 152–165 (SSSPSSQKSGTPIS) are compositionally biased toward low complexity. The span at 432–445 (GTSNGSHSPNPSGA) shows a compositional bias: polar residues.

It localises to the nucleus. Transcription factor; part of the gene cluster 29 that mediates the biosynthesis of dihydroxynaphthalene (DHN)-melanin, a bluish-green pigment forming a dark layer in the conidial wall that protects the conidia from UV radiations. This Zymoseptoria tritici (strain CBS 115943 / IPO323) (Speckled leaf blotch fungus) protein is Transcription factor MYCGRDRAFT_87993.